Reading from the N-terminus, the 160-residue chain is ATP synthase subunit delta, mitochondrial (160 aa).

Residues 1–22 constitute a mitochondrion transit peptide; that stretch reads MLRSIIGKSASRSLNFVAKRSY.

It belongs to the ATPase epsilon chain family. As to quaternary structure, F-type ATPases have 2 components, CF(1) - the catalytic core - and CF(0) - the membrane proton channel. CF(1) has five subunits: alpha(3), beta(3), gamma(1), delta(1), epsilon(1). CF(0) has three main subunits: a, b and c.

The protein resides in the mitochondrion. It is found in the mitochondrion inner membrane. Mitochondrial membrane ATP synthase (F(1)F(0) ATP synthase or Complex V) produces ATP from ADP in the presence of a proton gradient across the membrane which is generated by electron transport complexes of the respiratory chain. F-type ATPases consist of two structural domains, F(1) - containing the extramembraneous catalytic core, and F(0) - containing the membrane proton channel, linked together by a central stalk and a peripheral stalk. During catalysis, ATP turnover in the catalytic domain of F(1) is coupled via a rotary mechanism of the central stalk subunits to proton translocation. Part of the complex F(1) domain and of the central stalk which is part of the complex rotary element. Rotation of the central stalk against the surrounding alpha(3)beta(3) subunits leads to hydrolysis of ATP in three separate catalytic sites on the beta subunits. The polypeptide is ATP synthase subunit delta, mitochondrial (ATP16) (Saccharomyces cerevisiae (strain ATCC 204508 / S288c) (Baker's yeast)).